The following is a 130-amino-acid chain: Small ribosomal subunit protein uS8 (130 aa).

It belongs to the universal ribosomal protein uS8 family. As to quaternary structure, part of the 30S ribosomal subunit.

In terms of biological role, one of the primary rRNA binding proteins, it binds directly to 16S rRNA central domain where it helps coordinate assembly of the platform of the 30S subunit. The chain is Small ribosomal subunit protein uS8 from Methanotorris igneus (Methanococcus igneus).